We begin with the raw amino-acid sequence, 135 residues long: Flagellar assembly factor FliW 1 (135 aa).

This sequence belongs to the FliW family. Interacts with translational regulator CsrA and flagellin(s).

Its subcellular location is the cytoplasm. Its function is as follows. Acts as an anti-CsrA protein, binds CsrA and prevents it from repressing translation of its target genes, one of which is flagellin. Binds to flagellin and participates in the assembly of the flagellum. The sequence is that of Flagellar assembly factor FliW 1 from Helicobacter pylori (strain HPAG1).